The following is a 550-amino-acid chain: Zorya protein ZorA (550 aa).

The next 3 helical transmembrane spans lie at 16-36 (TLITNIFIWAVIFVFLSAWWC), 52-72 (LMGALGILGTFIGIIIGLLNF), and 92-112 (FITSIVGMFFAILFNGMDAFF).

It belongs to the MotA family.

It localises to the cell inner membrane. Functionally, component of antiviral defense system Zorya type II, composed of ZorA, ZorB and ZorE. Expression of Zorya type II in E.coli (strain MG1655) confers resistance to phages SECphi7 and T7. While most T7 infected Zorya-containing cells undergo abortive infection, a minority produce viable phage progeny. These eventually accumulate to a high multiplicity of infection, leading to culture collapse by 170 minutes after initial infection. ZorA and ZorB probably assemble in the cell inner membrane and exert their effect there. In Escherichia coli (strain ATCC 8739 / DSM 1576 / NBRC 3972 / NCIMB 8545 / WDCM 00012 / Crooks), this protein is Zorya protein ZorA.